We begin with the raw amino-acid sequence, 270 residues long: Tryptophan synthase alpha chain (270 aa).

Catalysis depends on proton acceptor residues glutamate 49 and aspartate 60.

The protein belongs to the TrpA family. Tetramer of two alpha and two beta chains.

It catalyses the reaction (1S,2R)-1-C-(indol-3-yl)glycerol 3-phosphate + L-serine = D-glyceraldehyde 3-phosphate + L-tryptophan + H2O. It participates in amino-acid biosynthesis; L-tryptophan biosynthesis; L-tryptophan from chorismate: step 5/5. Its function is as follows. The alpha subunit is responsible for the aldol cleavage of indoleglycerol phosphate to indole and glyceraldehyde 3-phosphate. The polypeptide is Tryptophan synthase alpha chain (Buchnera aphidicola subsp. Diuraphis noxia).